A 101-amino-acid polypeptide reads, in one-letter code: Vacuolar ATPase assembly integral membrane protein VMA21 (101 aa).

Topologically, residues 1–25 (MERPDKAALNALQPPEFRNESSLAS) are cytoplasmic. A helical transmembrane segment spans residues 26-46 (TLKTLLFFTALMITVPIGLYF). Residues 47 to 65 (TTKSYIFEGALGMSNRDSY) lie on the Lumenal side of the membrane. Residues 66-86 (FYAAIVAVVAVHVVLALFVYV) form a helical membrane-spanning segment. The Cytoplasmic segment spans residues 87-101 (AWNEGSRQWREGKQD).

The protein belongs to the VMA21 family. As to quaternary structure, associates with the V0 complex of the vacuolar ATPase (V-ATPase). Interacts with ATP6AP2.

Its subcellular location is the endoplasmic reticulum membrane. It is found in the endoplasmic reticulum-Golgi intermediate compartment membrane. The protein resides in the cytoplasmic vesicle. The protein localises to the COPII-coated vesicle membrane. Its function is as follows. Required for the assembly of the V0 complex of the vacuolar ATPase (V-ATPase) in the endoplasmic reticulum. The polypeptide is Vacuolar ATPase assembly integral membrane protein VMA21 (Homo sapiens (Human)).